The chain runs to 524 residues: Ankyrin repeat-containing protein At5g02620 (524 aa).

8 ANK repeats span residues 16-45 (RDDT…GVEL), 55-84 (SGET…SVLA), 90-119 (NGFD…ELSF), 124-153 (SKTT…DLAA), 158-187 (NGKT…GMVT), 192-222 (KGQT…LINS), 226-255 (KGNT…VSRV), and 260-289 (SGET…QNAR). 4 helical membrane-spanning segments follow: residues 349–369 (AINS…AAIF), 399–419 (FLIF…VVVV), 441–461 (LMWM…FVVV), and 472–492 (VTAI…YWVI). S508 carries the post-translational modification Phosphoserine.

Its subcellular location is the membrane. This Arabidopsis thaliana (Mouse-ear cress) protein is Ankyrin repeat-containing protein At5g02620.